The primary structure comprises 359 residues: Epoxide hydrolase 4 (359 aa).

A helical; Signal-anchor for type II membrane protein transmembrane segment spans residues 15–35 (ALLYWSLVYGYCGLCASVHLL). Positions 92-337 (PLMLLLHGFP…ILSEGSHWLQ (246 aa)) constitute an AB hydrolase-1 domain. Asp167 serves as the catalytic Nucleophile. Residue Tyr279 is the Proton donor of the active site. The active-site Proton acceptor is the His334.

This sequence belongs to the AB hydrolase superfamily. Epoxide hydrolase family.

The protein localises to the membrane. The chain is Epoxide hydrolase 4 (Ephx4) from Mus musculus (Mouse).